Consider the following 251-residue polypeptide: tRNA1(Val) (adenine(37)-N6)-methyltransferase (251 aa).

The protein belongs to the methyltransferase superfamily. tRNA (adenine-N(6)-)-methyltransferase family.

Its subcellular location is the cytoplasm. The catalysed reaction is adenosine(37) in tRNA1(Val) + S-adenosyl-L-methionine = N(6)-methyladenosine(37) in tRNA1(Val) + S-adenosyl-L-homocysteine + H(+). Specifically methylates the adenine in position 37 of tRNA(1)(Val) (anticodon cmo5UAC). This Shewanella frigidimarina (strain NCIMB 400) protein is tRNA1(Val) (adenine(37)-N6)-methyltransferase.